Reading from the N-terminus, the 396-residue chain is Tryptophan synthase beta chain (396 aa).

K86 carries the N6-(pyridoxal phosphate)lysine modification.

The protein belongs to the TrpB family. Tetramer of two alpha and two beta chains. The cofactor is pyridoxal 5'-phosphate.

The catalysed reaction is (1S,2R)-1-C-(indol-3-yl)glycerol 3-phosphate + L-serine = D-glyceraldehyde 3-phosphate + L-tryptophan + H2O. It functions in the pathway amino-acid biosynthesis; L-tryptophan biosynthesis; L-tryptophan from chorismate: step 5/5. In terms of biological role, the beta subunit is responsible for the synthesis of L-tryptophan from indole and L-serine. In Vibrio cholerae serotype O1 (strain ATCC 39315 / El Tor Inaba N16961), this protein is Tryptophan synthase beta chain.